The chain runs to 230 residues: UPF0173 metal-dependent hydrolase Pden_0574 (230 aa).

Belongs to the UPF0173 family.

This chain is UPF0173 metal-dependent hydrolase Pden_0574, found in Paracoccus denitrificans (strain Pd 1222).